Here is a 183-residue protein sequence, read N- to C-terminus: Large ribosomal subunit protein uL10 (183 aa).

It belongs to the universal ribosomal protein uL10 family. As to quaternary structure, part of the ribosomal stalk of the 50S ribosomal subunit. The N-terminus interacts with L11 and the large rRNA to form the base of the stalk. The C-terminus forms an elongated spine to which L12 dimers bind in a sequential fashion forming a multimeric L10(L12)X complex.

Its function is as follows. Forms part of the ribosomal stalk, playing a central role in the interaction of the ribosome with GTP-bound translation factors. The protein is Large ribosomal subunit protein uL10 of Mesomycoplasma hyopneumoniae (strain 232) (Mycoplasma hyopneumoniae).